We begin with the raw amino-acid sequence, 757 residues long: RNA-directed RNA polymerase catalytic subunit (757 aa).

The segment at 50-82 (SEKGKWTTNTETGAPQLNPIDGPLPEDNEPSGY) is disordered. Over residues 55–64 (WTTNTETGAP) the composition is skewed to polar residues. 2 consecutive short sequence motifs (nuclear localization signal) follow at residues 187–195 (RKRRVRDNM) and 203–216 (RTIGKKKQRLNKRS). The segment at 249–256 (RGFVYFVE) is promoter-binding site. In terms of domain architecture, RdRp catalytic spans 286–483 (VRKMMTNSQD…GINMTKKKSY (198 aa)).

This sequence belongs to the influenza viruses polymerase PB1 family. Influenza RNA polymerase is composed of three subunits: PB1, PB2 and PA. Interacts (via N-terminus) with PA (via C-terminus). Interacts (via C-terminus) with PB2 (via N-terminus); this interaction is essential for transcription initiation. In terms of processing, phosphorylated by host PRKCA.

Its subcellular location is the host nucleus. It localises to the host cytoplasm. It carries out the reaction RNA(n) + a ribonucleoside 5'-triphosphate = RNA(n+1) + diphosphate. Functionally, RNA-dependent RNA polymerase which is responsible for replication and transcription of virus RNA segments. The transcription of viral mRNAs occurs by a unique mechanism called cap-snatching. 5' methylated caps of cellular mRNAs are cleaved after 10-13 nucleotides by PA. In turn, these short capped RNAs are used as primers by PB1 for transcription of viral mRNAs. During virus replication, PB1 initiates RNA synthesis and copy vRNA into complementary RNA (cRNA) which in turn serves as a template for the production of more vRNAs. This is RNA-directed RNA polymerase catalytic subunit from Aves (Cat).